Reading from the N-terminus, the 387-residue chain is S-adenosylmethionine synthase (387 aa).

H19 is an ATP binding site. A Mg(2+)-binding site is contributed by D21. E47 serves as a coordination point for K(+). Q103 is an L-methionine binding site. A flexible loop region spans residues 103 to 113 (QSPDIAQGVEL). ATP is bound by residues 167–169 (DMK), 233–234 (RF), D242, 248–249 (RK), A265, and K269. D242 is a binding site for L-methionine. K273 serves as a coordination point for L-methionine.

This sequence belongs to the AdoMet synthase family. As to quaternary structure, homotetramer; dimer of dimers. Mg(2+) is required as a cofactor. It depends on K(+) as a cofactor.

The protein localises to the cytoplasm. It catalyses the reaction L-methionine + ATP + H2O = S-adenosyl-L-methionine + phosphate + diphosphate. Its pathway is amino-acid biosynthesis; S-adenosyl-L-methionine biosynthesis; S-adenosyl-L-methionine from L-methionine: step 1/1. In terms of biological role, catalyzes the formation of S-adenosylmethionine (AdoMet) from methionine and ATP. The overall synthetic reaction is composed of two sequential steps, AdoMet formation and the subsequent tripolyphosphate hydrolysis which occurs prior to release of AdoMet from the enzyme. The protein is S-adenosylmethionine synthase of Mycoplasma capricolum subsp. capricolum (strain California kid / ATCC 27343 / NCTC 10154).